The chain runs to 524 residues: Bifunctional purine biosynthesis protein PurH (524 aa).

The MGS-like domain maps to 1-145 (MIQQALLSVS…KNHRDVTVIV (145 aa)).

The protein belongs to the PurH family.

The catalysed reaction is (6R)-10-formyltetrahydrofolate + 5-amino-1-(5-phospho-beta-D-ribosyl)imidazole-4-carboxamide = 5-formamido-1-(5-phospho-D-ribosyl)imidazole-4-carboxamide + (6S)-5,6,7,8-tetrahydrofolate. It carries out the reaction IMP + H2O = 5-formamido-1-(5-phospho-D-ribosyl)imidazole-4-carboxamide. It participates in purine metabolism; IMP biosynthesis via de novo pathway; 5-formamido-1-(5-phospho-D-ribosyl)imidazole-4-carboxamide from 5-amino-1-(5-phospho-D-ribosyl)imidazole-4-carboxamide (10-formyl THF route): step 1/1. Its pathway is purine metabolism; IMP biosynthesis via de novo pathway; IMP from 5-formamido-1-(5-phospho-D-ribosyl)imidazole-4-carboxamide: step 1/1. This chain is Bifunctional purine biosynthesis protein PurH, found in Ralstonia pickettii (strain 12J).